We begin with the raw amino-acid sequence, 204 residues long: Tumor protein D53 (204 aa).

A disordered region spans residues 1-31 (MEAQAQGLLETEPLQGRDGDAVGSADFSSML). Residues 22 to 73 (VGSADFSSMLSEEEKEELKAELIQLEDEITTLRQVLSAKERHLVEIKQKLGM) are a coiled coil. A phosphoserine mark is found at serine 29, serine 86, serine 122, and serine 131. Arginine 133 is modified (omega-N-methylarginine). Position 146 is a phosphothreonine (threonine 146). 2 positions are modified to phosphoserine: serine 149 and serine 174. The tract at residues 164-204 (KVGGTNHGGGSFEEVLNSTAHASSQNASAGSRQTKDEELQC) is disordered. Positions 179-195 (LNSTAHASSQNASAGSR) are enriched in polar residues.

It belongs to the TPD52 family. In terms of assembly, forms a homodimer or heterodimer with other members of the family.

This is Tumor protein D53 (Tpd52l1) from Mus musculus (Mouse).